Reading from the N-terminus, the 1006-residue chain is Probable beta-galactosidase A (1006 aa).

Positions 1 to 18 (MKLLSVCAIALLAAQAAG) are cleaved as a signal peptide. Substrate contacts are provided by Y96, N140, A141, and E142. N-linked (GlcNAc...) asparagine glycosylation is present at N156. N199 serves as a coordination point for substrate. E200 (proton donor) is an active-site residue. A disulfide bridge connects residues C205 and C206. Y260 serves as a coordination point for substrate. The cysteines at positions 266 and 315 are disulfide-linked. E298 (nucleophile) is an active-site residue. Y364 contacts substrate. 7 N-linked (GlcNAc...) asparagine glycosylation sites follow: N373, N402, N422, N622, N760, N777, and N914.

The protein belongs to the glycosyl hydrolase 35 family.

It is found in the secreted. The catalysed reaction is Hydrolysis of terminal non-reducing beta-D-galactose residues in beta-D-galactosides.. Cleaves beta-linked terminal galactosyl residues from gangliosides, glycoproteins, and glycosaminoglycans. The sequence is that of Probable beta-galactosidase A (lacA) from Aspergillus fumigatus (strain CBS 144.89 / FGSC A1163 / CEA10) (Neosartorya fumigata).